The following is a 379-amino-acid chain: Succinate--CoA ligase [ADP-forming] subunit beta (379 aa).

The region spanning 9–235 (KEIAKNNGIP…GRELSEMEAI (227 aa)) is the ATP-grasp domain. Lysine 45, glutamate 91, isoleucine 94, and glutamate 99 together coordinate ATP. Mg(2+)-binding residues include asparagine 191 and aspartate 205. Residues asparagine 255 and 312–314 (GIT) contribute to the substrate site.

Belongs to the succinate/malate CoA ligase beta subunit family. Heterotetramer of two alpha and two beta subunits. The cofactor is Mg(2+).

It catalyses the reaction succinate + ATP + CoA = succinyl-CoA + ADP + phosphate. The catalysed reaction is GTP + succinate + CoA = succinyl-CoA + GDP + phosphate. It functions in the pathway carbohydrate metabolism; tricarboxylic acid cycle; succinate from succinyl-CoA (ligase route): step 1/1. Functionally, succinyl-CoA synthetase functions in the citric acid cycle (TCA), coupling the hydrolysis of succinyl-CoA to the synthesis of either ATP or GTP and thus represents the only step of substrate-level phosphorylation in the TCA. The beta subunit provides nucleotide specificity of the enzyme and binds the substrate succinate, while the binding sites for coenzyme A and phosphate are found in the alpha subunit. In Staphylothermus marinus (strain ATCC 43588 / DSM 3639 / JCM 9404 / F1), this protein is Succinate--CoA ligase [ADP-forming] subunit beta.